Reading from the N-terminus, the 221-residue chain is MYFILTKDSFKDSPFLKFITVLLPYLHPPVLHLLLLHTNWRKTHKSKHTILYCLVNLLLLAFAVANILSIVALIVDKQKRTDDLLLHSIILPSFFIPPAYLLSTSCCLVPGQIGFTDTGINVIIDILILICPAISLVLVDEKSKYYPYSTAIPSILILVRLFREKCSPPKQSSPPIPTWRVAAFVFILVLAVLVYGLLGSGSIITLYDHFHPPKGADATSS.

Belongs to the UPF0328 family.

This Encephalitozoon cuniculi (strain GB-M1) (Microsporidian parasite) protein is UPF0328 protein ECU11_2110.